Reading from the N-terminus, the 158-residue chain is Transcription elongation factor GreA (158 aa).

Belongs to the GreA/GreB family.

Necessary for efficient RNA polymerase transcription elongation past template-encoded arresting sites. The arresting sites in DNA have the property of trapping a certain fraction of elongating RNA polymerases that pass through, resulting in locked ternary complexes. Cleavage of the nascent transcript by cleavage factors such as GreA or GreB allows the resumption of elongation from the new 3'terminus. GreA releases sequences of 2 to 3 nucleotides. This Ruthia magnifica subsp. Calyptogena magnifica protein is Transcription elongation factor GreA.